The following is a 301-amino-acid chain: MKINLNNMVTESRNPASANIDTLPTLEMLKLINDEDKKVALAVEQTLPKIAETVDKIAEAFRQGGRLIYIGAGTSGRLGILDASECPPTYGTKPEQVVGLIAGGHQAILHAVENAEDNQQLGANDLQALHFNSKDVLVGIAASGRTPYVLGAMTYAKSVGATVACISCNPESPMTQAADIAIAPIVGPEIVTGSSRMKAGTAQKLILNMLTTGAMIRTGKVYSNLMVDVEATNAKLVERQKNIVIAATECNREQAEQALAECDGHCKTAIVMILAGINAQQAKTLLKKHHGFIRPTISAVR.

An SIS domain is found at I57–K220. E85 acts as the Proton donor in catalysis. E116 is a catalytic residue.

The protein belongs to the GCKR-like family. MurNAc-6-P etherase subfamily. Homodimer.

The catalysed reaction is N-acetyl-D-muramate 6-phosphate + H2O = N-acetyl-D-glucosamine 6-phosphate + (R)-lactate. Its pathway is amino-sugar metabolism; 1,6-anhydro-N-acetylmuramate degradation. The protein operates within amino-sugar metabolism; N-acetylmuramate degradation. It participates in cell wall biogenesis; peptidoglycan recycling. Its function is as follows. Specifically catalyzes the cleavage of the D-lactyl ether substituent of MurNAc 6-phosphate, producing GlcNAc 6-phosphate and D-lactate. Together with AnmK, is also required for the utilization of anhydro-N-acetylmuramic acid (anhMurNAc) either imported from the medium or derived from its own cell wall murein, and thus plays a role in cell wall recycling. The sequence is that of N-acetylmuramic acid 6-phosphate etherase from Photorhabdus laumondii subsp. laumondii (strain DSM 15139 / CIP 105565 / TT01) (Photorhabdus luminescens subsp. laumondii).